The chain runs to 95 residues: MSINQHEIEHVAKLARLTLRDDEKQLFTGQMEAILAYVETLNELNTDDIAPTSHAVPMENAFRPDCVAPSIGHDRALANAPDKNETYFRVPPVIE.

This sequence belongs to the GatC family. Heterotrimer of A, B and C subunits.

It catalyses the reaction L-glutamyl-tRNA(Gln) + L-glutamine + ATP + H2O = L-glutaminyl-tRNA(Gln) + L-glutamate + ADP + phosphate + H(+). The catalysed reaction is L-aspartyl-tRNA(Asn) + L-glutamine + ATP + H2O = L-asparaginyl-tRNA(Asn) + L-glutamate + ADP + phosphate + 2 H(+). Allows the formation of correctly charged Asn-tRNA(Asn) or Gln-tRNA(Gln) through the transamidation of misacylated Asp-tRNA(Asn) or Glu-tRNA(Gln) in organisms which lack either or both of asparaginyl-tRNA or glutaminyl-tRNA synthetases. The reaction takes place in the presence of glutamine and ATP through an activated phospho-Asp-tRNA(Asn) or phospho-Glu-tRNA(Gln). This is Aspartyl/glutamyl-tRNA(Asn/Gln) amidotransferase subunit C from Trichlorobacter lovleyi (strain ATCC BAA-1151 / DSM 17278 / SZ) (Geobacter lovleyi).